The following is a 176-amino-acid chain: Acireductone dioxygenase (176 aa).

Fe(2+)-binding residues include histidine 100, histidine 102, glutamate 106, and histidine 145. Histidine 100, histidine 102, glutamate 106, and histidine 145 together coordinate Ni(2+).

This sequence belongs to the acireductone dioxygenase (ARD) family. As to quaternary structure, monomer. The cofactor is Fe(2+). It depends on Ni(2+) as a cofactor.

The enzyme catalyses 1,2-dihydroxy-5-(methylsulfanyl)pent-1-en-3-one + O2 = 3-(methylsulfanyl)propanoate + CO + formate + 2 H(+). The catalysed reaction is 1,2-dihydroxy-5-(methylsulfanyl)pent-1-en-3-one + O2 = 4-methylsulfanyl-2-oxobutanoate + formate + 2 H(+). It functions in the pathway amino-acid biosynthesis; L-methionine biosynthesis via salvage pathway; L-methionine from S-methyl-5-thio-alpha-D-ribose 1-phosphate: step 5/6. Its function is as follows. Catalyzes 2 different reactions between oxygen and the acireductone 1,2-dihydroxy-3-keto-5-methylthiopentene (DHK-MTPene) depending upon the metal bound in the active site. Fe-containing acireductone dioxygenase (Fe-ARD) produces formate and 2-keto-4-methylthiobutyrate (KMTB), the alpha-ketoacid precursor of methionine in the methionine recycle pathway. Ni-containing acireductone dioxygenase (Ni-ARD) produces methylthiopropionate, carbon monoxide and formate, and does not lie on the methionine recycle pathway. This chain is Acireductone dioxygenase, found in Bacillus pumilus (strain SAFR-032).